Reading from the N-terminus, the 158-residue chain is 6,7-dimethyl-8-ribityllumazine synthase (158 aa).

Residues F23, 61 to 63 (SFE), and 85 to 87 (AVI) contribute to the 5-amino-6-(D-ribitylamino)uracil site. 90–91 (ET) is a binding site for (2S)-2-hydroxy-3-oxobutyl phosphate. The active-site Proton donor is H93. 5-amino-6-(D-ribitylamino)uracil is bound at residue F118. R132 lines the (2S)-2-hydroxy-3-oxobutyl phosphate pocket.

Belongs to the DMRL synthase family.

The enzyme catalyses (2S)-2-hydroxy-3-oxobutyl phosphate + 5-amino-6-(D-ribitylamino)uracil = 6,7-dimethyl-8-(1-D-ribityl)lumazine + phosphate + 2 H2O + H(+). Its pathway is cofactor biosynthesis; riboflavin biosynthesis; riboflavin from 2-hydroxy-3-oxobutyl phosphate and 5-amino-6-(D-ribitylamino)uracil: step 1/2. In terms of biological role, catalyzes the formation of 6,7-dimethyl-8-ribityllumazine by condensation of 5-amino-6-(D-ribitylamino)uracil with 3,4-dihydroxy-2-butanone 4-phosphate. This is the penultimate step in the biosynthesis of riboflavin. This chain is 6,7-dimethyl-8-ribityllumazine synthase, found in Prochlorococcus marinus (strain MIT 9215).